Reading from the N-terminus, the 559-residue chain is Dihydroxy-acid dehydratase (559 aa).

Mg(2+) is bound at residue aspartate 78. Cysteine 119 contacts [2Fe-2S] cluster. Mg(2+)-binding residues include aspartate 120 and lysine 121. N6-carboxylysine is present on lysine 121. Residue cysteine 192 coordinates [2Fe-2S] cluster. Glutamate 446 contacts Mg(2+). The Proton acceptor role is filled by serine 472.

It belongs to the IlvD/Edd family. In terms of assembly, homodimer. [2Fe-2S] cluster is required as a cofactor. The cofactor is Mg(2+).

The enzyme catalyses (2R)-2,3-dihydroxy-3-methylbutanoate = 3-methyl-2-oxobutanoate + H2O. The catalysed reaction is (2R,3R)-2,3-dihydroxy-3-methylpentanoate = (S)-3-methyl-2-oxopentanoate + H2O. It participates in amino-acid biosynthesis; L-isoleucine biosynthesis; L-isoleucine from 2-oxobutanoate: step 3/4. It functions in the pathway amino-acid biosynthesis; L-valine biosynthesis; L-valine from pyruvate: step 3/4. Its function is as follows. Functions in the biosynthesis of branched-chain amino acids. Catalyzes the dehydration of (2R,3R)-2,3-dihydroxy-3-methylpentanoate (2,3-dihydroxy-3-methylvalerate) into 2-oxo-3-methylpentanoate (2-oxo-3-methylvalerate) and of (2R)-2,3-dihydroxy-3-methylbutanoate (2,3-dihydroxyisovalerate) into 2-oxo-3-methylbutanoate (2-oxoisovalerate), the penultimate precursor to L-isoleucine and L-valine, respectively. This is Dihydroxy-acid dehydratase from Wolinella succinogenes (strain ATCC 29543 / DSM 1740 / CCUG 13145 / JCM 31913 / LMG 7466 / NCTC 11488 / FDC 602W) (Vibrio succinogenes).